We begin with the raw amino-acid sequence, 2157 residues long: Unconventional myosin-IXb (2157 aa).

Serine 2 carries the post-translational modification N-acetylserine. Residues alanine 15–alanine 114 enclose the Ras-associating domain. The 808-residue stretch at alanine 146–histidine 953 folds into the Myosin motor domain. ATP is bound at residue glycine 239–threonine 246. The interval alanine 709–proline 734 is disordered. Phosphoserine is present on residues serine 716 and serine 717. The segment at lysine 844 to serine 855 is actin-binding. The tract at residues leucine 940 to phenylalanine 1044 is neck or regulatory domain. IQ domains lie at valine 957 to leucine 977, methionine 979 to glutamate 1000, arginine 1001 to histidine 1023, and glutamine 1024 to lysine 1053. Serine 1045 is modified (phosphoserine). The interval serine 1045–glycine 2157 is tail. Residues glutamine 1046–glutamate 1071 are a coiled coil. Disordered regions lie at residues glutamine 1046 to glutamine 1298, alanine 1320 to valine 1410, and glycine 1455 to arginine 1484. 5 stretches are compositionally biased toward basic and acidic residues: residues glutamate 1050 to glutamate 1063, serine 1109 to serine 1122, glutamate 1136 to lysine 1160, serine 1168 to threonine 1183, and leucine 1191 to glutamate 1201. Phosphoserine occurs at positions 1114, 1115, and 1122. Over residues glutamate 1211–proline 1222 the composition is skewed to polar residues. A phosphoserine mark is found at serine 1242, serine 1253, serine 1261, and serine 1267. Residue threonine 1271 is modified to Phosphothreonine. 3 positions are modified to phosphoserine: serine 1290, serine 1323, and serine 1331. Threonine 1346 carries the post-translational modification Phosphothreonine. 3 positions are modified to phosphoserine: serine 1354, serine 1356, and serine 1405. Residues alanine 1467–glycine 1478 show a composition bias toward basic and acidic residues. The Phorbol-ester/DAG-type zinc finger occupies glycine 1632–cysteine 1681. The 186-residue stretch at aspartate 1703–tyrosine 1888 folds into the Rho-GAP domain. Positions alanine 1739–arginine 1744 are interaction with RHOA. Positions leucine 1880–alanine 1901 form a coiled coil. Residues serine 1926, serine 1972, serine 1992, and serine 1999 each carry the phosphoserine modification. The stretch at glutamate 1959–proline 1989 forms a coiled coil. Residues isoleucine 1980–aspartate 1993 are compositionally biased toward basic and acidic residues. The segment at isoleucine 1980 to glycine 2157 is disordered. Residue threonine 2005 is modified to Phosphothreonine. Residues proline 2021–leucine 2037 show a composition bias toward pro residues. Phosphoserine is present on serine 2050. The span at proline 2081–proline 2093 shows a compositional bias: low complexity. Over residues arginine 2095–glutamine 2106 the composition is skewed to basic and acidic residues. Serine 2141 is modified (phosphoserine).

This sequence belongs to the TRAFAC class myosin-kinesin ATPase superfamily. Myosin family. Interacts (via IQ domains) with CALM. Interacts with RHOA. Interacts (via Rho-GAP domain) with ROBO1; this inhibits the interaction with RHOA and the stimulation of RHOA GTPase activity, and thereby increases the levels of active RHOA. As to expression, detected in peripheral blood leukocytes (at protein level). Expressed predominantly in peripheral blood leukocytes and at lower levels, in thymus, spleen, testis, prostate, ovary, brain, small intestine and lung.

Its subcellular location is the cytoplasm. It is found in the cell cortex. The protein localises to the perinuclear region. It localises to the cytoskeleton. In terms of biological role, myosins are actin-based motor molecules with ATPase activity. Unconventional myosins serve in intracellular movements. Binds actin with high affinity both in the absence and presence of ATP and its mechanochemical activity is inhibited by calcium ions. Also acts as a GTPase activator for RHOA. Plays a role in the regulation of cell migration via its role as RHOA GTPase activator. This is regulated by its interaction with the SLIT2 receptor ROBO1; interaction with ROBO1 impairs interaction with RHOA and subsequent activation of RHOA GTPase activity, and thereby leads to increased levels of active, GTP-bound RHOA. The sequence is that of Unconventional myosin-IXb (MYO9B) from Homo sapiens (Human).